Reading from the N-terminus, the 152-residue chain is UPF0266 membrane protein PM0830 (152 aa).

The next 3 helical transmembrane spans lie at 1–21 (MMIINVLLCLGIFCFLLYAFY), 45–65 (KDALIFSLLIGIIIYQTYTNL), and 66–86 (SSATLYLLTALILLSVYAAFI).

It belongs to the UPF0266 family.

It is found in the cell inner membrane. The polypeptide is UPF0266 membrane protein PM0830 (Pasteurella multocida (strain Pm70)).